Consider the following 519-residue polypeptide: Membrane-bound lytic murein transglycosylase F (519 aa).

An N-terminal signal peptide occupies residues 1–32; that stretch reads MKKLKLNYLLIGVVTLLLAVALWPAIPWSGKA. Positions 33 to 269 are non-LT domain; it reads DNRIAAIQAR…RLEEKYLGHG (237 aa). Positions 270–519 are LT domain; sequence NDFDYVDTRS…PNTLSPVSPR (250 aa). Glutamate 314 is a catalytic residue. Positions 495–519 are disordered; it reads PFSQAGAGGKTHSALPNTLSPVSPR. Over residues 508–519 the composition is skewed to polar residues; it reads ALPNTLSPVSPR.

The protein in the N-terminal section; belongs to the bacterial solute-binding protein 3 family. In the C-terminal section; belongs to the transglycosylase Slt family.

It localises to the cell outer membrane. The enzyme catalyses Exolytic cleavage of the (1-&gt;4)-beta-glycosidic linkage between N-acetylmuramic acid (MurNAc) and N-acetylglucosamine (GlcNAc) residues in peptidoglycan, from either the reducing or the non-reducing ends of the peptidoglycan chains, with concomitant formation of a 1,6-anhydrobond in the MurNAc residue.. In terms of biological role, murein-degrading enzyme that degrades murein glycan strands and insoluble, high-molecular weight murein sacculi, with the concomitant formation of a 1,6-anhydromuramoyl product. Lytic transglycosylases (LTs) play an integral role in the metabolism of the peptidoglycan (PG) sacculus. Their lytic action creates space within the PG sacculus to allow for its expansion as well as for the insertion of various structures such as secretion systems and flagella. This Cronobacter sakazakii (strain ATCC BAA-894) (Enterobacter sakazakii) protein is Membrane-bound lytic murein transglycosylase F.